Reading from the N-terminus, the 591-residue chain is V-type ATP synthase alpha chain (591 aa).

232-239 provides a ligand contact to ATP; the sequence is GPFGAGKT.

Belongs to the ATPase alpha/beta chains family.

The enzyme catalyses ATP + H2O + 4 H(+)(in) = ADP + phosphate + 5 H(+)(out). Functionally, produces ATP from ADP in the presence of a proton gradient across the membrane. The V-type alpha chain is a catalytic subunit. The chain is V-type ATP synthase alpha chain from Nitrosococcus oceani (strain ATCC 19707 / BCRC 17464 / JCM 30415 / NCIMB 11848 / C-107).